The chain runs to 216 residues: U1 small nuclear ribonucleoprotein A (216 aa).

2 consecutive RRM domains span residues 7–86 and 142–216; these read QTIY…YSKS and QILF…FAKK. The disordered stretch occupies residues 97-142; the sequence is TFKERPKKVKPPKPAPGTDEKKDKKKKPSSAENSNPNAQTEQPPNQ. Over residues 126–142 the composition is skewed to polar residues; that stretch reads SAENSNPNAQTEQPPNQ.

Belongs to the RRM U1 A/B'' family. In terms of assembly, belongs to the spliceosome where it is associated with snRNP U1. Interacts with the SMN complex.

It localises to the nucleus. Its function is as follows. Binds stem loop II of U1 snRNA. It is the first snRNP to interact with pre-mRNA. This interaction is required for the subsequent binding of U2 snRNP and the U4/U6/U5 tri-snRNP. Plays a role in regulating sex-lethal splicing. This Drosophila melanogaster (Fruit fly) protein is U1 small nuclear ribonucleoprotein A (snf).